Reading from the N-terminus, the 27-residue chain is DELTA-pseudomyrmecitoxin-Pp1a subunit A (27 aa).

In terms of assembly, heterodimer composed of subunit A and subunit B (DELTA-PSDTX-Pp1a); disulfide-linked. As to expression, expressed by the venom gland.

The protein resides in the secreted. Functionally, this heterodimer has insecticidal and cytotoxic properties. Induces immediate paralysis when injected into blowflies (Lucilia cuprina), and then death within 24 hours. Also inhibits the growth of Aedes albopictus mosquito C6/36 cells. This is DELTA-pseudomyrmecitoxin-Pp1a subunit A from Pseudomyrmex penetrator (Ant).